The primary structure comprises 464 residues: Argininosuccinate lyase (464 aa).

Belongs to the lyase 1 family. Argininosuccinate lyase subfamily.

The protein resides in the cytoplasm. It catalyses the reaction 2-(N(omega)-L-arginino)succinate = fumarate + L-arginine. The protein operates within amino-acid biosynthesis; L-arginine biosynthesis; L-arginine from L-ornithine and carbamoyl phosphate: step 3/3. This chain is Argininosuccinate lyase, found in Ectopseudomonas mendocina (strain ymp) (Pseudomonas mendocina).